The primary structure comprises 1896 residues: Obscurin-like protein 1 (1896 aa).

Position 10 is a phosphoserine (S10). The Ig-like 1 domain occupies P12–T100. Positions F17–R19 are interaction with TTN. C33 and C84 form a disulfide bridge. The tract at residues R85–Y94 is interaction with TTN. Residues A106–A127 form a disordered region. 3 consecutive Ig-like domains span residues P128–Q225, P243–S330, and P339–T425. Disulfide bonds link C149–C209, C267–C319, and C362–C412. The region spanning P517 to T615 is the Fibronectin type-III domain. 10 Ig-like domains span residues P714 to T800, P804 to T893, P902 to T982, P986 to T1075, P1078 to Q1172, L1174 to Q1261, P1265 to P1357, P1357 to S1534, P1628 to A1720, and P1794 to N1896. 6 disulfides stabilise this stretch: C738–C788, C829–C879, C920–C970, C1011–C1061, C1103–C1153, and C1195–C1245. 2 disulfide bridges follow: C1381–C1522 and C1650–C1700.

Component of the 3M complex, composed of core components CUL7, CCDC8 and OBSL1. Interacts with CCDC8. Interacts with CUL7; the interaction is direct. Interacts with FBXW8. Interacts (via N-terminal Ig-like domain) with TTN/titin (via C-terminal Ig-like domain); the interaction is direct. Widely expressed, with predominant levels found in the heart.

The protein localises to the cytoplasm. The protein resides in the cytoskeleton. Its subcellular location is the microtubule organizing center. It localises to the centrosome. It is found in the perinuclear region. The protein localises to the golgi apparatus. Core component of the 3M complex, a complex required to regulate microtubule dynamics and genome integrity. It is unclear how the 3M complex regulates microtubules, it could act by controlling the level of a microtubule stabilizer. Acts as a regulator of the Cul7-RING(FBXW8) ubiquitin-protein ligase, playing a critical role in the ubiquitin ligase pathway that regulates Golgi morphogenesis and dendrite patterning in brain. Required to localize CUL7 to the Golgi apparatus in neurons. This chain is Obscurin-like protein 1, found in Homo sapiens (Human).